The chain runs to 952 residues: Pentatricopeptide repeat-containing protein At5g04810, chloroplastic (952 aa).

The N-terminal 60 residues, methionine 1 to glycine 60, are a transit peptide targeting the chloroplast. Disordered stretches follow at residues serine 30–leucine 95 and leucine 115–glutamine 163. Pro residues predominate over residues glutamine 37–proline 49. Residues serine 58–proline 68 are compositionally biased toward low complexity. Over residues serine 122–valine 133 the composition is skewed to pro residues. The span at threonine 137–glutamine 163 shows a compositional bias: basic and acidic residues. One can recognise an RRM domain in the interval isoleucine 167 to valine 238. A compositionally biased stretch (basic and acidic residues) spans glutamate 259–arginine 280. Residues glutamate 259–lysine 281 form a disordered region. PPR repeat units lie at residues serine 308–proline 342, threonine 343–methionine 377, serine 378–leucine 412, asparagine 413–alanine 447, proline 448–proline 482, threonine 483–histidine 517, asparagine 518–proline 552, aspartate 553–proline 587, threonine 588–proline 622, threonine 623–alanine 657, asparagine 658–valine 692, aspartate 693–arginine 727, asparagine 728–proline 762, aspartate 763–proline 797, and asparagine 798–proline 832. Residues aspartate 918–lysine 952 form a disordered region. Residues serine 921–valine 941 are compositionally biased toward acidic residues.

This sequence belongs to the PPR family. P subfamily.

The protein resides in the plastid. The protein localises to the chloroplast. In terms of biological role, may play a role in the plastid ribosome biogenesis. The protein is Pentatricopeptide repeat-containing protein At5g04810, chloroplastic (PPR4) of Arabidopsis thaliana (Mouse-ear cress).